Reading from the N-terminus, the 235-residue chain is Large ribosomal subunit protein uL1 (235 aa).

It belongs to the universal ribosomal protein uL1 family. As to quaternary structure, part of the 50S ribosomal subunit.

Binds directly to 23S rRNA. The L1 stalk is quite mobile in the ribosome, and is involved in E site tRNA release. In terms of biological role, protein L1 is also a translational repressor protein, it controls the translation of the L11 operon by binding to its mRNA. This Nitratidesulfovibrio vulgaris (strain ATCC 29579 / DSM 644 / CCUG 34227 / NCIMB 8303 / VKM B-1760 / Hildenborough) (Desulfovibrio vulgaris) protein is Large ribosomal subunit protein uL1.